The chain runs to 534 residues: Dual specificity calcium/calmodulin-dependent 3',5'-cyclic nucleotide phosphodiesterase 1B (534 aa).

Residues Met-1–Glu-21 form a disordered region. Ser-7 and Ser-14 each carry phosphoserine. Calmodulin-binding regions lie at residues Ser-27–Asn-47 and Glu-116–Arg-139. Positions Val-144 to Gly-501 constitute a PDEase domain. The Proton donor role is filled by His-221. 4 residues coordinate Zn(2+): His-225, His-261, Asp-262, and Asp-368. Asp-262 is a binding site for Mg(2+). Disordered regions lie at residues Val-442–Asn-473 and Trp-494–Asp-534. The span at Lys-453–Gln-462 shows a compositional bias: polar residues. 2 positions are modified to phosphoserine: Ser-464 and Ser-512.

It belongs to the cyclic nucleotide phosphodiesterase family. PDE1 subfamily. In terms of assembly, homodimer. Requires Zn(2+) as cofactor. Mg(2+) is required as a cofactor. As to expression, expressed in central nervous system regions. Most abundant in basal ganglia. Also found in kidney papilla and adrenal medulla.

Its subcellular location is the cytoplasm. It is found in the cytosol. The enzyme catalyses a nucleoside 3',5'-cyclic phosphate + H2O = a nucleoside 5'-phosphate + H(+). It catalyses the reaction 3',5'-cyclic GMP + H2O = GMP + H(+). The catalysed reaction is 3',5'-cyclic AMP + H2O = AMP + H(+). With respect to regulation, type I PDE are activated by the binding of calmodulin in the presence of Ca(2+). In terms of biological role, cyclic nucleotide phosphodiesterase with a dual specificity for the second messengers cAMP and cGMP, which are key regulators of many important physiological processes. Has a preference for cGMP as a substrate. This chain is Dual specificity calcium/calmodulin-dependent 3',5'-cyclic nucleotide phosphodiesterase 1B, found in Bos taurus (Bovine).